The primary structure comprises 208 residues: uncharacterized protein (208 aa).

The first 16 residues, 1–16 (MTRVALLTTGRELSQA), serve as a signal peptide directing secretion. Disordered stretches follow at residues 1-95 (MTRV…VRGQ) and 145-176 (RVTKVSSSGPNSTPLPAARIGPGTNNAPSAAD). The segment covering 16-25 (AAPPARARTP) has biased composition (low complexity). The span at 32–43 (RGERPDDGGHAP) shows a compositional bias: basic and acidic residues. Positions 44-54 (HRDRRVNQRRR) are enriched in basic residues. Positions 55 to 95 (QVGDRRAQRGVDEHPWRRPDERPNDHLPQRNSERPEGVRGQ) are enriched in basic and acidic residues. Polar residues-rich tracts occupy residues 148 to 158 (KVSSSGPNSTP) and 167 to 176 (GTNNAPSAAD).

This is an uncharacterized protein from Mycobacterium tuberculosis (strain CDC 1551 / Oshkosh).